Here is a 143-residue protein sequence, read N- to C-terminus: Cold shock domain-containing protein CG9705 (143 aa).

Residues 1-30 (MTEPRTPEKLLAAKPPVLHHNSHSPNASLQ) are disordered. Phosphoserine is present on residues S22, S24, S28, and S33. Residues 54–121 (VVTGMVKSFS…KHQAVHVQIS (68 aa)) enclose the CSD domain. 2 positions are modified to phosphoserine: S139 and S140.

The protein is Cold shock domain-containing protein CG9705 of Drosophila melanogaster (Fruit fly).